We begin with the raw amino-acid sequence, 216 residues long: Octanoyltransferase (216 aa).

Positions 34–209 (ENTIDEIWLV…KMNQQLDYSH (176 aa)) constitute a BPL/LPL catalytic domain. Substrate is bound by residues 73 to 80 (RGGQITFH), 140 to 142 (SLG), and 153 to 155 (GLA). Residue Cys171 is the Acyl-thioester intermediate of the active site.

The protein belongs to the LipB family.

It localises to the cytoplasm. It catalyses the reaction octanoyl-[ACP] + L-lysyl-[protein] = N(6)-octanoyl-L-lysyl-[protein] + holo-[ACP] + H(+). It functions in the pathway protein modification; protein lipoylation via endogenous pathway; protein N(6)-(lipoyl)lysine from octanoyl-[acyl-carrier-protein]: step 1/2. Its function is as follows. Catalyzes the transfer of endogenously produced octanoic acid from octanoyl-acyl-carrier-protein onto the lipoyl domains of lipoate-dependent enzymes. Lipoyl-ACP can also act as a substrate although octanoyl-ACP is likely to be the physiological substrate. The polypeptide is Octanoyltransferase (Psychromonas ingrahamii (strain DSM 17664 / CCUG 51855 / 37)).